The primary structure comprises 761 residues: 52 kDa repressor of the inhibitor of the protein kinase (761 aa).

The THAP-type zinc-finger motif lies at 1-86; the sequence is MPNFCAAPNC…LRDNAIPTIF (86 aa). The span at 116–132 shows a compositional bias: basic and acidic residues; the sequence is QKKIDETSEQEQKHKET. Positions 116–149 are disordered; sequence QKKIDETSEQEQKHKETNNSNAQNPSEEEGEGQD. Ser566 carries the post-translational modification Phosphoserine.

As to quaternary structure, interacts with DNAJC3, probably sequestring it.

Functionally, upstream regulator of interferon-induced serine/threonine protein kinase R (PKR). May block the PKR-inhibitory function of DNAJC3, resulting in restoration of kinase activity and suppression of cell growth. This Homo sapiens (Human) protein is 52 kDa repressor of the inhibitor of the protein kinase.